The sequence spans 377 residues: Nuclear pore complex protein NUP54 (377 aa).

Residues 1-18 (MFGTPSSSPSFGTPSSTP) are compositionally biased toward low complexity. The segment at 1-104 (MFGTPSSSPS…NTAQQQQQTP (104 aa)) is disordered. 7 consecutive repeat copies span residues 2–3 (FG), 11–12 (FG), 20–21 (FG), 27–28 (FG), 36–37 (FG), 49–50 (FG), and 87–88 (FG). Residues 2 to 88 (FGTPSSSPSF…FQQQPSSNFG (87 aa)) are 7 X 2 AA repeats of F-G. Over residues 19–32 (AFGTSSPAFGTPSA) the composition is skewed to polar residues. Residues 39–104 (PSNPSFSSGG…NTAQQQQQTP (66 aa)) are compositionally biased toward low complexity.

It belongs to the NUP54 family. As to quaternary structure, part of the nuclear pore complex (NPC). The NPC has an eight-fold symmetrical structure comprising a central transport channel and two rings, the cytoplasmic and nuclear rings, to which eight filaments are attached. The cytoplasmic filaments have loose ends, while the nuclear filaments are joined in a distal ring, forming a nuclear basket. NPCs are highly dynamic in configuration and composition, and can be devided in 3 subcomplexes, the NUP62 subcomplex, the NUP107-160 subcomplex and the NUP93 subcomplex, containing approximately 30 different nucleoporin proteins.

It localises to the nucleus envelope. The protein resides in the nucleus. It is found in the nuclear pore complex. This is Nuclear pore complex protein NUP54 from Arabidopsis thaliana (Mouse-ear cress).